Consider the following 121-residue polypeptide: MRFTKDHEWVIVEGDVATVGITAYAAEQLGDVVFVETPEAGKVVKQGEGLAVVESVKAASDVYAPVSGEVIEGNGELAGAPETVNALPESGGWFAKIKLANPAELDALMDRDAYEAFLGTL.

Positions 16 to 98 (VATVGITAYA…ESGGWFAKIK (83 aa)) constitute a Lipoyl-binding domain. Lys57 carries the post-translational modification N6-lipoyllysine.

The protein belongs to the GcvH family. The glycine cleavage system is composed of four proteins: P, T, L and H. It depends on (R)-lipoate as a cofactor.

The glycine cleavage system catalyzes the degradation of glycine. The H protein shuttles the methylamine group of glycine from the P protein to the T protein. The protein is Glycine cleavage system H protein of Caulobacter vibrioides (strain NA1000 / CB15N) (Caulobacter crescentus).